The following is a 201-amino-acid chain: Anthranilate synthase component 2 (201 aa).

Residues 1–199 (MLLMIDNYDS…LRQQGGVRGE (199 aa)) enclose the Glutamine amidotransferase type-1 domain. An L-glutamine-binding site is contributed by 52 to 54 (GPC). Cys-79 serves as the catalytic Nucleophile; for GATase activity. Residues Gln-83 and 129–130 (SL) contribute to the L-glutamine site. Residues His-173 and Glu-175 each act as for GATase activity in the active site.

Heterotetramer consisting of two non-identical subunits: a beta subunit (TrpG) and a large alpha subunit (TrpE).

It carries out the reaction chorismate + L-glutamine = anthranilate + pyruvate + L-glutamate + H(+). The protein operates within amino-acid biosynthesis; L-tryptophan biosynthesis; L-tryptophan from chorismate: step 1/5. Functionally, part of a heterotetrameric complex that catalyzes the two-step biosynthesis of anthranilate, an intermediate in the biosynthesis of L-tryptophan. In the first step, the glutamine-binding beta subunit (TrpG) of anthranilate synthase (AS) provides the glutamine amidotransferase activity which generates ammonia as a substrate that, along with chorismate, is used in the second step, catalyzed by the large alpha subunit of AS (TrpE) to produce anthranilate. In the absence of TrpG, TrpE can synthesize anthranilate directly from chorismate and high concentrations of ammonia. The polypeptide is Anthranilate synthase component 2 (Pseudomonas aeruginosa (strain ATCC 15692 / DSM 22644 / CIP 104116 / JCM 14847 / LMG 12228 / 1C / PRS 101 / PAO1)).